Here is a 383-residue protein sequence, read N- to C-terminus: Probable butyrate kinase (383 aa).

This sequence belongs to the acetokinase family.

It localises to the cytoplasm. The catalysed reaction is butanoate + ATP = butanoyl phosphate + ADP. The protein is Probable butyrate kinase of Deinococcus radiodurans (strain ATCC 13939 / DSM 20539 / JCM 16871 / CCUG 27074 / LMG 4051 / NBRC 15346 / NCIMB 9279 / VKM B-1422 / R1).